Reading from the N-terminus, the 635-residue chain is Thrombopoietin receptor (635 aa).

The first 25 residues, 1–25 (MPSWALFMVTSCLLLAPQNLAQVSS), serve as a signal peptide directing secretion. Topologically, residues 26 to 491 (QDVSLLASDS…RVETATETAW (466 aa)) are extracellular. Disulfide bonds link cysteine 40-cysteine 50 and cysteine 77-cysteine 93. N-linked (GlcNAc...) asparagine glycans are attached at residues asparagine 117 and asparagine 178. Residues 172-281 (GPRDPKNSTG…WSLPVTVDLP (110 aa)) form the Fibronectin type-III 1 domain. 4 disulfides stabilise this stretch: cysteine 193–cysteine 323, cysteine 194–cysteine 241, cysteine 291–cysteine 301, and cysteine 334–cysteine 352. The segment at 205-232 (ALDQSPCAQPTMPWQDGPKQTSPSREAS) is disordered. Asparagine 298 is a glycosylation site (N-linked (GlcNAc...) asparagine). An N-linked (GlcNAc...) asparagine glycan is attached at asparagine 358. The Fibronectin type-III 2 domain maps to 392–486 (PTPNLHWREI…WSDPTRVETA (95 aa)). Residues 474–478 (WSSWS) carry the WSXWS motif motif. A helical transmembrane segment spans residues 492–513 (ISLVTALHLVLGLSAVLGLLLL). Over 514–635 (RWQFPAHYRR…YLPLSYWQQP (122 aa)) the chain is Cytoplasmic. A Box 1 motif motif is present at residues 528-536 (LWPSLPDLH). Glycyl lysine isopeptide (Lys-Gly) (interchain with G-Cter in ubiquitin) cross-links involve residues lysine 553 and lysine 573. Residues tyrosine 591, tyrosine 626, and tyrosine 631 each carry the phosphotyrosine modification.

This sequence belongs to the type I cytokine receptor family. Type 1 subfamily. In terms of assembly, homodimer. Interacts with ATXN2L. Interacts with JAK2 and TYK2; these interactions increase MPL localization to the cell membrane. Interacts with THPO. Interacts with SHIP/INPP5D. Interacts with BTK. Interacts with SYK; this interaction negatively regulates THPO-mediated ERK1/2 signaling. Phosphorylated at Tyr-591 in response to THPO stimulation. Post-translationally, ubiquitination at Lys-553 and Lys-573 targets MPL for degradation by both the lysosomal and proteasomal pathways. The E3 ubiquitin-protein ligase CBL significantly contributes to this ubiquitination. As to expression, expressed at a low level in a large number of cells of hematopoietic origin. Isoform 1 and isoform 2 are always found to be coexpressed.

The protein resides in the cell membrane. It is found in the golgi apparatus. It localises to the cell surface. In terms of biological role, receptor for thrombopoietin that regulates hematopoietic stem cell renewal, megakaryocyte differentiation, and platelet formation. Upon activation by THPO, induces rapid tyrosine phosphorylation and activation of JAK2, providing docking sites for many signaling proteins such as STAT5, SHIP/INPP5D, GRB2, SOS1 and PI3K. In turn, These signaling cascades lead to the proliferation, survival, and differentiation of megakaryocytes, ultimately leading to increased platelet production. This chain is Thrombopoietin receptor (MPL), found in Homo sapiens (Human).